We begin with the raw amino-acid sequence, 350 residues long: Chorismate synthase (350 aa).

NADP(+)-binding residues include R39 and R45. Residues R119–S121, Q213–A214, G258, K273–T277, and R299 each bind FMN.

This sequence belongs to the chorismate synthase family. In terms of assembly, homotetramer. The cofactor is FMNH2.

It carries out the reaction 5-O-(1-carboxyvinyl)-3-phosphoshikimate = chorismate + phosphate. The protein operates within metabolic intermediate biosynthesis; chorismate biosynthesis; chorismate from D-erythrose 4-phosphate and phosphoenolpyruvate: step 7/7. Its function is as follows. Catalyzes the anti-1,4-elimination of the C-3 phosphate and the C-6 proR hydrogen from 5-enolpyruvylshikimate-3-phosphate (EPSP) to yield chorismate, which is the branch point compound that serves as the starting substrate for the three terminal pathways of aromatic amino acid biosynthesis. This reaction introduces a second double bond into the aromatic ring system. This Thermoanaerobacter pseudethanolicus (strain ATCC 33223 / 39E) (Clostridium thermohydrosulfuricum) protein is Chorismate synthase.